Consider the following 618-residue polypeptide: 1-deoxy-D-xylulose-5-phosphate synthase (618 aa).

Residues H72 and 113–115 contribute to the thiamine diphosphate site; that span reads GHA. Position 144 (D144) interacts with Mg(2+). Residues 145–146, N173, H284, and E359 each bind thiamine diphosphate; that span reads GA. Residue N173 participates in Mg(2+) binding.

This sequence belongs to the transketolase family. DXPS subfamily. Homodimer. It depends on Mg(2+) as a cofactor. The cofactor is thiamine diphosphate.

It catalyses the reaction D-glyceraldehyde 3-phosphate + pyruvate + H(+) = 1-deoxy-D-xylulose 5-phosphate + CO2. It participates in metabolic intermediate biosynthesis; 1-deoxy-D-xylulose 5-phosphate biosynthesis; 1-deoxy-D-xylulose 5-phosphate from D-glyceraldehyde 3-phosphate and pyruvate: step 1/1. Functionally, catalyzes the acyloin condensation reaction between C atoms 2 and 3 of pyruvate and glyceraldehyde 3-phosphate to yield 1-deoxy-D-xylulose-5-phosphate (DXP). The polypeptide is 1-deoxy-D-xylulose-5-phosphate synthase (Dictyoglomus turgidum (strain DSM 6724 / Z-1310)).